Consider the following 128-residue polypeptide: Histone H2A.2 (128 aa).

It belongs to the histone H2A family. In terms of assembly, the nucleosome is a histone octamer containing two molecules each of H2A, H2B, H3 and H4 assembled in one H3-H4 heterotetramer and two H2A-H2B heterodimers. The octamer wraps approximately 147 bp of DNA. In terms of tissue distribution, expressed in the generative cell within the bicellular pollen. Not detected in other reproductive or vegetative tissues.

It localises to the nucleus. The protein localises to the chromosome. Functionally, core component of nucleosome. Nucleosomes wrap and compact DNA into chromatin, limiting DNA accessibility to the cellular machineries which require DNA as a template. Histones thereby play a central role in transcription regulation, DNA repair, DNA replication and chromosomal stability. DNA accessibility is regulated via a complex set of post-translational modifications of histones, also called histone code, and nucleosome remodeling. May be involved in the repression of gene expression in male gametes. This Lilium longiflorum (Trumpet lily) protein is Histone H2A.2 (gH2A).